A 403-amino-acid polypeptide reads, in one-letter code: Phosphopentomutase (403 aa).

Mn(2+)-binding residues include Asp-13, Asp-298, His-303, Asp-339, His-340, and His-351.

This sequence belongs to the phosphopentomutase family. Requires Mn(2+) as cofactor.

It localises to the cytoplasm. It carries out the reaction 2-deoxy-alpha-D-ribose 1-phosphate = 2-deoxy-D-ribose 5-phosphate. The catalysed reaction is alpha-D-ribose 1-phosphate = D-ribose 5-phosphate. The protein operates within carbohydrate degradation; 2-deoxy-D-ribose 1-phosphate degradation; D-glyceraldehyde 3-phosphate and acetaldehyde from 2-deoxy-alpha-D-ribose 1-phosphate: step 1/2. Its function is as follows. Isomerase that catalyzes the conversion of deoxy-ribose 1-phosphate (dRib-1-P) and ribose 1-phosphate (Rib-1-P) to deoxy-ribose 5-phosphate (dRib-5-P) and ribose 5-phosphate (Rib-5-P), respectively. In Streptococcus equi subsp. zooepidemicus (strain H70), this protein is Phosphopentomutase.